Consider the following 245-residue polypeptide: Thiopurine S-methyltransferase (245 aa).

29–40 (WQEKWVSRRIGF) is an S-adenosyl-L-methionine binding site. Position 40 (phenylalanine 40) interacts with substrate. Lysine 58 bears the N6-acetyllysine mark. Leucine 69, glutamate 90, and arginine 152 together coordinate S-adenosyl-L-methionine.

The protein belongs to the class I-like SAM-binding methyltransferase superfamily. TPMT family. Monomer.

The protein localises to the cytoplasm. It catalyses the reaction S-adenosyl-L-methionine + a thiopurine = S-adenosyl-L-homocysteine + a thiopurine S-methylether.. This is Thiopurine S-methyltransferase (TPMT) from Lycaon pictus (African wild dog).